Consider the following 672-residue polypeptide: Bifunctional polymyxin resistance protein ArnA (672 aa).

Residues 1-310 are formyltransferase ArnAFT; that stretch reads MKAIVFAYHD…EMGMVPQAKL (310 aa). Residue histidine 104 is the Proton donor; for formyltransferase activity of the active site. Residues arginine 114 and 136-140 each bind (6R)-10-formyltetrahydrofolate; that span reads VSRAD. Positions 320–672 are dehydrogenase ArnADH; it reads RRTRVLILGV…HADNVTDTQG (353 aa). NAD(+) is bound by residues aspartate 353 and 374–375; that span reads DI. UDP-alpha-D-glucuronate-binding positions include alanine 399, tyrosine 404, and 438–439; that span reads TS. The Proton acceptor; for decarboxylase activity role is filled by glutamate 440. Residues arginine 466, asparagine 498, 532–541, and tyrosine 619 contribute to the UDP-alpha-D-glucuronate site; that span reads KLVDGGAQKR. Arginine 625 functions as the Proton donor; for decarboxylase activity in the catalytic mechanism.

The protein in the N-terminal section; belongs to the Fmt family. UDP-L-Ara4N formyltransferase subfamily. In the C-terminal section; belongs to the NAD(P)-dependent epimerase/dehydratase family. UDP-glucuronic acid decarboxylase subfamily. In terms of assembly, homohexamer, formed by a dimer of trimers.

It carries out the reaction UDP-alpha-D-glucuronate + NAD(+) = UDP-beta-L-threo-pentopyranos-4-ulose + CO2 + NADH. It catalyses the reaction UDP-4-amino-4-deoxy-beta-L-arabinose + (6R)-10-formyltetrahydrofolate = UDP-4-deoxy-4-formamido-beta-L-arabinose + (6S)-5,6,7,8-tetrahydrofolate + H(+). It participates in nucleotide-sugar biosynthesis; UDP-4-deoxy-4-formamido-beta-L-arabinose biosynthesis; UDP-4-deoxy-4-formamido-beta-L-arabinose from UDP-alpha-D-glucuronate: step 1/3. Its pathway is nucleotide-sugar biosynthesis; UDP-4-deoxy-4-formamido-beta-L-arabinose biosynthesis; UDP-4-deoxy-4-formamido-beta-L-arabinose from UDP-alpha-D-glucuronate: step 3/3. It functions in the pathway bacterial outer membrane biogenesis; lipopolysaccharide biosynthesis. In terms of biological role, bifunctional enzyme that catalyzes the oxidative decarboxylation of UDP-glucuronic acid (UDP-GlcUA) to UDP-4-keto-arabinose (UDP-Ara4O) and the addition of a formyl group to UDP-4-amino-4-deoxy-L-arabinose (UDP-L-Ara4N) to form UDP-L-4-formamido-arabinose (UDP-L-Ara4FN). The modified arabinose is attached to lipid A and is required for resistance to polymyxin and cationic antimicrobial peptides. The protein is Bifunctional polymyxin resistance protein ArnA of Pectobacterium carotovorum subsp. carotovorum (strain PC1).